Reading from the N-terminus, the 476-residue chain is Lactate utilization protein B (476 aa).

4Fe-4S ferredoxin-type domains lie at 304 to 334 (GGEFQPILQCIRCAACVNACPVYRHVGGHTY) and 353 to 382 (YDDFKELPYASTLCGACTDACPVKIPLHQL). Residues C313, C316, C319, C323, C366, C369, and C373 each contribute to the [4Fe-4S] cluster site. Residues 452-476 (RDFPAPNKNSFRNWMKHRTKGDEES) are disordered.

The protein belongs to the LutB/YkgF family.

Functionally, is involved in L-lactate degradation and allows cells to grow with lactate as the sole carbon source. Has probably a role as an electron transporter during oxidation of L-lactate. The sequence is that of Lactate utilization protein B from Lysinibacillus sphaericus (strain C3-41).